Consider the following 302-residue polypeptide: Probable lipid kinase YegS-like (302 aa).

The region spanning M1 to L129 is the DAGKc domain. ATP is bound by residues T39, G65–E71, and T92. 3 residues coordinate Mg(2+): R210, D213, and L215. Catalysis depends on E268, which acts as the Proton acceptor.

This sequence belongs to the diacylglycerol/lipid kinase family. YegS lipid kinase subfamily. Mg(2+) serves as cofactor. It depends on Ca(2+) as a cofactor.

Its subcellular location is the cytoplasm. Its function is as follows. Probably phosphorylates lipids; the in vivo substrate is unknown. This Pseudomonas aeruginosa (strain UCBPP-PA14) protein is Probable lipid kinase YegS-like.